The primary structure comprises 167 residues: Cyclic pyranopterin monophosphate synthase 2 (167 aa).

The disordered stretch occupies residues 1-23 (MARASGASDYRSGELSHQDERGA). Residues 11–23 (RSGELSHQDERGA) are compositionally biased toward basic and acidic residues. Residues 86-88 (LCH) and 122-123 (ME) each bind substrate. The active site involves aspartate 137.

Belongs to the MoaC family. As to quaternary structure, homohexamer; trimer of dimers.

The enzyme catalyses (8S)-3',8-cyclo-7,8-dihydroguanosine 5'-triphosphate = cyclic pyranopterin phosphate + diphosphate. It functions in the pathway cofactor biosynthesis; molybdopterin biosynthesis. In terms of biological role, catalyzes the conversion of (8S)-3',8-cyclo-7,8-dihydroguanosine 5'-triphosphate to cyclic pyranopterin monophosphate (cPMP). The sequence is that of Cyclic pyranopterin monophosphate synthase 2 (moaC2) from Mycobacterium bovis (strain ATCC BAA-935 / AF2122/97).